The chain runs to 335 residues: Malate dehydrogenase (335 aa).

11-17 (GAAGQIG) serves as a coordination point for NAD(+). R94 and R100 together coordinate substrate. NAD(+) contacts are provided by residues N107, Q114, and 131–133 (VGN). Residues N133 and R167 each contribute to the substrate site. The active-site Proton acceptor is the H192.

Belongs to the LDH/MDH superfamily. MDH type 2 family.

It carries out the reaction (S)-malate + NAD(+) = oxaloacetate + NADH + H(+). Its function is as follows. Catalyzes the reversible oxidation of malate to oxaloacetate. This Bdellovibrio bacteriovorus (strain ATCC 15356 / DSM 50701 / NCIMB 9529 / HD100) protein is Malate dehydrogenase.